The following is an 84-amino-acid chain: Toluene-4-monooxygenase system, hydroxylase component subunit gamma (84 aa).

It belongs to the TmoB/XamoB family. The alkene monooxygenase multicomponent enzyme system is composed of an electron transfer component and a monooxygenase component interacting with the effector protein TmoD. The electron transfer component is composed of a ferredoxin reductase (TmoF) and a ferredoxin (TmoC), and the monooxygenase component is formed by a heterohexamer (dimer of heterotrimers) of two alpha subunits (TmoA), two beta subunits (TmoE) and two gamma subunits (TmoB).

The enzyme catalyses toluene + NADH + O2 + H(+) = 4-methylphenol + NAD(+) + H2O. The protein operates within xenobiotic degradation; toluene degradation. Inhibited by Zn(2+) and Cu(2+). In terms of biological role, component of the toluene-4-monooxygenase multicomponent enzyme system which catalyzes the O2- and NADH-dependent hydroxylation of toluene to form p-cresol. Also able to convert benzene to phenol, catechol, and 1,2,3-trihydroxybenzene by successive hydroxylations. The sequence is that of Toluene-4-monooxygenase system, hydroxylase component subunit gamma from Ectopseudomonas mendocina (Pseudomonas mendocina).